The primary structure comprises 175 residues: uncharacterized protein (175 aa).

In terms of domain architecture, Macro spans 1–173 (MYKNIIKLIS…VYKEKYKKLL (173 aa)).

This sequence belongs to the MacroD-type family.

This is an uncharacterized protein from Fusobacterium nucleatum subsp. nucleatum (strain ATCC 25586 / DSM 15643 / BCRC 10681 / CIP 101130 / JCM 8532 / KCTC 2640 / LMG 13131 / VPI 4355).